We begin with the raw amino-acid sequence, 1125 residues long: Telomerase reverse transcriptase (1125 aa).

Positions 1–239 are RNA-interacting domain 1; it reads MPRAPRCPAV…TKRLLSLTST (239 aa). The tract at residues 58–205 is GQ motif; it reads VPWGSQPPPA…RPVGGNFTNL (148 aa). The tract at residues 137 to 141 is required for regulating specificity for telomeric DNA and for processivity for primer elongation; sequence WMLLL. Positions 206–216 are enriched in polar residues; that stretch reads GSAHQIKNSGH. Residues 206–304 form a disordered region; sequence GSAHQIKNSG…ASDPSLSGSV (99 aa). Residues 240-328 form a linker region; sequence NVPSAKKARF…PPQDAEKLRP (89 aa). The segment covering 247–259 has biased composition (basic and acidic residues); the sequence is ARFEPALRVDKGP. Residues 273–287 show a composition bias toward low complexity; sequence APSPAASPKVPPAAK. The interval 306 to 528 is required for oligomerization; that stretch reads CKHKPSSSSL…VPAAEHRLRE (223 aa). The segment at 329–540 is RNA-interacting domain 2; the sequence is FTETRHFLYS…LAMFLFWLMD (212 aa). The short motif at 332–337 is the TFLY; involved in RNA binding element; it reads TRHFLY. The segment at 381–511 is QFP motif; sequence FCRTRRLPRR…VKVEDCHWLR (131 aa). The tract at residues 402 to 422 is CP motif; the sequence is LMNHAKCQYVRFLRSHCRFRT. Ser-447 carries the post-translational modification Phosphoserine; by DYRK2. The 334-residue stretch at 595 to 928 folds into the Reverse transcriptase domain; sequence EVKHHQDTWL…CLFPWCGLLL (334 aa). Tyr-697 is modified (phosphotyrosine; by SRC-type Tyr-kinases). The Mg(2+) site is built by Asp-702, Asp-861, and Asp-862. A required for oligomerization region spans residues 907 to 921; sequence LGGAAPHQLPAHCLF. Residues 923 to 927 form a primer grip sequence region; the sequence is WCGLL. Residues 929–1125 are CTE; it reads DTRTLEVFCD…LSTDFQTILD (197 aa).

This sequence belongs to the reverse transcriptase family. Telomerase subfamily. Catalytic component of the telomerase holoenzyme complex composed of one molecule of TERT, one molecule of WRAP53/TCAB1, two molecules of H/ACA ribonucleoprotein complex subunits DKC1, NOP10, NHP2 and GAR1, and a telomerase RNA template component (TERC). The telomerase holoenzyme complex is associated with TEP1, SMG6/EST1A and POT1. The molecular chaperone HSP90/P23 complex is required for correct assembly and stabilization of the active telomerase. Interacts directly with HSP90A and PTGES3. Interacts with HSPA1A; the interaction occurs in the absence of TERC and dissociates once the complex has formed. Interacts with RAN; the interaction promotes nuclear export of TERT. Interacts with XPO1. Interacts with PTPN11; the interaction retains TERT in the nucleus. Interacts with NCL (via RRM1 and C-terminal RRM4/Arg/Gly-rich domains); the interaction is important for nucleolar localization of TERT. Interacts with SMARCA4 (via the bromodomain); the interaction regulates Wnt-mediated signaling. Interacts with MCRS1 (isoform MCRS2); the interaction inhibits in vitro telomerase activity. Interacts with PIF1; the interaction has no effect on the elongation activity of TERT. Interacts with PML; the interaction recruits TERT to PML bodies and inhibits telomerase activity. Interacts with GNL3L. Interacts with isoform 1 and isoform 2 of NVL. Interacts with DHX36. Interacts with ATF7. In terms of processing, phosphorylation at Tyr-697 under oxidative stress leads to translocation of TERT to the cytoplasm and reduces its antiapoptotic activity. Dephosphorylated by SHP2/PTPN11 leading to nuclear retention. Phosphorylation at the G2/M phase at Ser-447 by DYRK2 promotes ubiquitination by the EDVP complex and degradation. Ubiquitinated by the EDVP complex, a E3 ligase complex following phosphorylation at Ser-447 by DYRK2. Ubiquitinated leads to proteasomal degradation. In terms of tissue distribution, isoform 1 and isoform 2 expressed in thymus, liver, spleen, lung, kidney and testis. High level of inactive isoform 3 in adult hippocampus, low level in heart, cortex and cerebellum.

The protein localises to the nucleus. The protein resides in the nucleolus. Its subcellular location is the nucleoplasm. It localises to the chromosome. It is found in the telomere. The protein localises to the cytoplasm. The protein resides in the PML body. The catalysed reaction is DNA(n) + a 2'-deoxyribonucleoside 5'-triphosphate = DNA(n+1) + diphosphate. Telomerase is a ribonucleoprotein enzyme essential for the replication of chromosome termini in most eukaryotes. Active in progenitor and cancer cells. Inactive, or very low activity, in normal somatic cells. Catalytic component of the teleromerase holoenzyme complex whose main activity is the elongation of telomeres by acting as a reverse transcriptase that adds simple sequence repeats to chromosome ends by copying a template sequence within the RNA component of the enzyme. Catalyzes the RNA-dependent extension of 3'-chromosomal termini with the 6-nucleotide telomeric repeat unit, 5'-TTAGGG-3'. The catalytic cycle involves primer binding, primer extension and release of product once the template boundary has been reached or nascent product translocation followed by further extension. More active on substrates containing 2 or 3 telomeric repeats. Telomerase activity is regulated by a number of factors including telomerase complex-associated proteins, chaperones and polypeptide modifiers. Modulates Wnt signaling. Plays important roles in aging and antiapoptosis. This Rattus norvegicus (Rat) protein is Telomerase reverse transcriptase.